The chain runs to 277 residues: Pantothenate synthetase (277 aa).

26–33 (MGNLHEGH) contacts ATP. The active-site Proton donor is His33. Residue Gln57 coordinates (R)-pantoate. Gln57 is a binding site for beta-alanine. 144 to 147 (GKKD) serves as a coordination point for ATP. Residue Gln150 participates in (R)-pantoate binding. Residues Gly173 and 181 to 184 (LSSR) contribute to the ATP site.

This sequence belongs to the pantothenate synthetase family. As to quaternary structure, homodimer.

The protein localises to the cytoplasm. The catalysed reaction is (R)-pantoate + beta-alanine + ATP = (R)-pantothenate + AMP + diphosphate + H(+). It functions in the pathway cofactor biosynthesis; (R)-pantothenate biosynthesis; (R)-pantothenate from (R)-pantoate and beta-alanine: step 1/1. In terms of biological role, catalyzes the condensation of pantoate with beta-alanine in an ATP-dependent reaction via a pantoyl-adenylate intermediate. The protein is Pantothenate synthetase of Laribacter hongkongensis (strain HLHK9).